Reading from the N-terminus, the 67-residue chain is Protein AaeX (67 aa).

The next 2 helical transmembrane spans lie at 10-30 and 43-63; these read FGLS…LFFV and FVWH…YLLF.

It belongs to the AaeX family.

The protein resides in the cell membrane. The chain is Protein AaeX from Pectobacterium atrosepticum (strain SCRI 1043 / ATCC BAA-672) (Erwinia carotovora subsp. atroseptica).